The sequence spans 345 residues: NADH-ubiquinone oxidoreductase chain 2 (345 aa).

Helical transmembrane passes span 1-21 (MNPLINFILLSSMIAGTILTT), 26-46 (WVSAWLGLELNTLAIIPIISM), 60-80 (FLIQAASSALVLLSGIINAHL), 96-115 (IALTTALATKLGLAPIHFWL), 122-144 (VPILTALIIATWQKIAPMALLIM), 148-170 (LIPTPITLIMGLTSTIVGGLGGL), 201-223 (TLLNLILYIPMTSLTMLIMHLTM), 242-262 (SLFLLSLLSLGGLPPLSGFIP), 274-294 (NLTPMAFMMAITALLSLMFYL), and 323-343 (TSTLPLLSLISIFLLPITPTL).

It belongs to the complex I subunit 2 family.

It localises to the mitochondrion inner membrane. It catalyses the reaction a ubiquinone + NADH + 5 H(+)(in) = a ubiquinol + NAD(+) + 4 H(+)(out). In terms of biological role, core subunit of the mitochondrial membrane respiratory chain NADH dehydrogenase (Complex I) that is believed to belong to the minimal assembly required for catalysis. Complex I functions in the transfer of electrons from NADH to the respiratory chain. The immediate electron acceptor for the enzyme is believed to be ubiquinone. This chain is NADH-ubiquinone oxidoreductase chain 2 (MT-ND2), found in Varanus nebulosus (Clouded monitor).